Reading from the N-terminus, the 892-residue chain is Alanine--tRNA ligase (892 aa).

Residues H596, H600, C700, and H704 each coordinate Zn(2+).

This sequence belongs to the class-II aminoacyl-tRNA synthetase family. Zn(2+) is required as a cofactor.

It is found in the cytoplasm. The enzyme catalyses tRNA(Ala) + L-alanine + ATP = L-alanyl-tRNA(Ala) + AMP + diphosphate. Its function is as follows. Catalyzes the attachment of alanine to tRNA(Ala) in a two-step reaction: alanine is first activated by ATP to form Ala-AMP and then transferred to the acceptor end of tRNA(Ala). Also edits incorrectly charged Ser-tRNA(Ala) and Gly-tRNA(Ala) via its editing domain. This is Alanine--tRNA ligase from Methanococcus maripaludis (strain C5 / ATCC BAA-1333).